Consider the following 126-residue polypeptide: Large ribosomal subunit protein bL12c (126 aa).

This sequence belongs to the bacterial ribosomal protein bL12 family. In terms of assembly, homodimer. Part of the ribosomal stalk of the 50S ribosomal subunit. Forms a multimeric L10(L12)X complex, where L10 forms an elongated spine to which 2 to 4 L12 dimers bind in a sequential fashion. Binds GTP-bound translation factors.

It is found in the plastid. The protein resides in the cyanelle. In terms of biological role, forms part of the ribosomal stalk which helps the ribosome interact with GTP-bound translation factors. Is thus essential for accurate translation. The chain is Large ribosomal subunit protein bL12c from Cyanophora paradoxa.